Consider the following 110-residue polypeptide: Nucleoid-associated protein PERMA_0533 (110 aa).

It belongs to the YbaB/EbfC family. Homodimer.

It is found in the cytoplasm. The protein localises to the nucleoid. Functionally, binds to DNA and alters its conformation. May be involved in regulation of gene expression, nucleoid organization and DNA protection. The polypeptide is Nucleoid-associated protein PERMA_0533 (Persephonella marina (strain DSM 14350 / EX-H1)).